We begin with the raw amino-acid sequence, 386 residues long: Lipoyl synthase, mitochondrial (386 aa).

A mitochondrion-targeting transit peptide spans 1–21 (MISRNSILLRRLYPTTIIRTL). Residues C107, C112, C118, C137, C141, C144, and S352 each coordinate [4Fe-4S] cluster. Residues 122–341 (KKSEATATIM…RDTALDMGFL (220 aa)) enclose the Radical SAM core domain.

The protein belongs to the radical SAM superfamily. Lipoyl synthase family. It depends on [4Fe-4S] cluster as a cofactor.

The protein resides in the mitochondrion. The enzyme catalyses [[Fe-S] cluster scaffold protein carrying a second [4Fe-4S](2+) cluster] + N(6)-octanoyl-L-lysyl-[protein] + 2 oxidized [2Fe-2S]-[ferredoxin] + 2 S-adenosyl-L-methionine + 4 H(+) = [[Fe-S] cluster scaffold protein] + N(6)-[(R)-dihydrolipoyl]-L-lysyl-[protein] + 4 Fe(3+) + 2 hydrogen sulfide + 2 5'-deoxyadenosine + 2 L-methionine + 2 reduced [2Fe-2S]-[ferredoxin]. It functions in the pathway protein modification; protein lipoylation via endogenous pathway; protein N(6)-(lipoyl)lysine from octanoyl-[acyl-carrier-protein]: step 2/2. Its function is as follows. Catalyzes the radical-mediated insertion of two sulfur atoms into the C-6 and C-8 positions of the octanoyl moiety bound to the lipoyl domains of lipoate-dependent enzymes, thereby converting the octanoylated domains into lipoylated derivatives. The protein is Lipoyl synthase, mitochondrial (LAB5) of Candida albicans (strain SC5314 / ATCC MYA-2876) (Yeast).